We begin with the raw amino-acid sequence, 165 residues long: UBA-like domain-containing protein 2-B (165 aa).

Positions 119–165 (QQPVWLPPASPTAHLHHHHHHPQPVWPPNSQPTGGPQKAMAAMDGQR) are disordered.

This sequence belongs to the UBALD family.

This chain is UBA-like domain-containing protein 2-B (ubald2-b), found in Xenopus laevis (African clawed frog).